A 572-amino-acid polypeptide reads, in one-letter code: Dihydroxy-acid dehydratase (572 aa).

Cys57 serves as a coordination point for [2Fe-2S] cluster. Asp89 is a Mg(2+) binding site. Cys130 contributes to the [2Fe-2S] cluster binding site. Asp131 and Lys132 together coordinate Mg(2+). N6-carboxylysine is present on Lys132. Residue Cys202 coordinates [2Fe-2S] cluster. Residue Glu453 participates in Mg(2+) binding. Ser479 serves as the catalytic Proton acceptor.

It belongs to the IlvD/Edd family. Homodimer. Requires [2Fe-2S] cluster as cofactor. It depends on Mg(2+) as a cofactor.

The enzyme catalyses (2R)-2,3-dihydroxy-3-methylbutanoate = 3-methyl-2-oxobutanoate + H2O. It carries out the reaction (2R,3R)-2,3-dihydroxy-3-methylpentanoate = (S)-3-methyl-2-oxopentanoate + H2O. The protein operates within amino-acid biosynthesis; L-isoleucine biosynthesis; L-isoleucine from 2-oxobutanoate: step 3/4. It participates in amino-acid biosynthesis; L-valine biosynthesis; L-valine from pyruvate: step 3/4. Functionally, functions in the biosynthesis of branched-chain amino acids. Catalyzes the dehydration of (2R,3R)-2,3-dihydroxy-3-methylpentanoate (2,3-dihydroxy-3-methylvalerate) into 2-oxo-3-methylpentanoate (2-oxo-3-methylvalerate) and of (2R)-2,3-dihydroxy-3-methylbutanoate (2,3-dihydroxyisovalerate) into 2-oxo-3-methylbutanoate (2-oxoisovalerate), the penultimate precursor to L-isoleucine and L-valine, respectively. The sequence is that of Dihydroxy-acid dehydratase from Streptococcus sanguinis (strain SK36).